We begin with the raw amino-acid sequence, 212 residues long: Putative protein phosphatase 2C 53 (212 aa).

In terms of domain architecture, PPM-type phosphatase spans 1–208 (MEDRFSAITN…DDISVMLIPL (208 aa)). Asp199 contacts Mn(2+).

This sequence belongs to the PP2C family. It depends on Mg(2+) as a cofactor. Requires Mn(2+) as cofactor.

The enzyme catalyses O-phospho-L-seryl-[protein] + H2O = L-seryl-[protein] + phosphate. It catalyses the reaction O-phospho-L-threonyl-[protein] + H2O = L-threonyl-[protein] + phosphate. The sequence is that of Putative protein phosphatase 2C 53 from Arabidopsis thaliana (Mouse-ear cress).